The sequence spans 249 residues: Cytochrome c oxidase subunit 2 (249 aa).

2 consecutive transmembrane segments (helical) span residues 40–60 (NIMF…YTIT) and 81–101 (IIWT…SFIL). The Cu cation site is built by H184, C219, E221, C223, H227, and M230. E221 contributes to the Mg(2+) binding site.

The protein belongs to the cytochrome c oxidase subunit 2 family. Component of the cytochrome c oxidase (complex IV, CIV), a multisubunit enzyme composed of a catalytic core of 3 subunits and several supernumerary subunits. The complex exists as a monomer or a dimer and forms supercomplexes (SCs) in the inner mitochondrial membrane with ubiquinol-cytochrome c oxidoreductase (cytochrome b-c1 complex, complex III, CIII). Cu cation is required as a cofactor.

It localises to the mitochondrion inner membrane. It catalyses the reaction 4 Fe(II)-[cytochrome c] + O2 + 8 H(+)(in) = 4 Fe(III)-[cytochrome c] + 2 H2O + 4 H(+)(out). Component of the cytochrome c oxidase, the last enzyme in the mitochondrial electron transport chain which drives oxidative phosphorylation. The respiratory chain contains 3 multisubunit complexes succinate dehydrogenase (complex II, CII), ubiquinol-cytochrome c oxidoreductase (cytochrome b-c1 complex, complex III, CIII) and cytochrome c oxidase (complex IV, CIV), that cooperate to transfer electrons derived from NADH and succinate to molecular oxygen, creating an electrochemical gradient over the inner membrane that drives transmembrane transport and the ATP synthase. Cytochrome c oxidase is the component of the respiratory chain that catalyzes the reduction of oxygen to water. Electrons originating from reduced cytochrome c in the intermembrane space (IMS) are transferred via the dinuclear copper A center (CU(A)) of subunit 2 and heme A of subunit 1 to the active site in subunit 1, a binuclear center (BNC) formed by heme A3 and copper B (CU(B)). The BNC reduces molecular oxygen to 2 water molecules using 4 electrons from cytochrome c in the IMS and 4 protons from the mitochondrial matrix. This Vanderwaltozyma polyspora (strain ATCC 22028 / DSM 70294 / BCRC 21397 / CBS 2163 / NBRC 10782 / NRRL Y-8283 / UCD 57-17) (Kluyveromyces polysporus) protein is Cytochrome c oxidase subunit 2 (COX2).